The primary structure comprises 367 residues: Peroxidase 1 (367 aa).

An N-terminal signal peptide occupies residues 1-33 (MAKESKLTAGVAAALTVVAACALCLLLPATARA). Gln34 carries the post-translational modification Pyrrolidone carboxylic acid. Disulfide bonds link Cys44–Cys125, Cys77–Cys82, Cys131–Cys335, and Cys209–Cys244. His75 serves as the catalytic Proton acceptor. Ca(2+)-binding residues include Asp76, Val79, Gly81, Asp83, and Ser85. The N-linked (GlcNAc...) asparagine glycan is linked to Asn164. Substrate is bound at residue Pro172. Residue His202 participates in heme b binding. Thr203 is a binding site for Ca(2+). 2 N-linked (GlcNAc...) asparagine glycosylation sites follow: Asn218 and Asn247. Asp259, Thr262, and Asp267 together coordinate Ca(2+). The N-linked (GlcNAc...) asparagine glycan is linked to Asn303.

Belongs to the peroxidase family. Classical plant (class III) peroxidase subfamily. Heme b is required as a cofactor. Requires Ca(2+) as cofactor. As to expression, expressed in the root tip meristems.

The protein resides in the secreted. It localises to the vacuole. It carries out the reaction 2 a phenolic donor + H2O2 = 2 a phenolic radical donor + 2 H2O. In terms of biological role, removal of H(2)O(2), oxidation of toxic reductants, biosynthesis and degradation of lignin, suberization, auxin catabolism, response to environmental stresses such as wounding, pathogen attack and oxidative stress. These functions might be dependent on each isozyme/isoform in each plant tissue. This chain is Peroxidase 1 (PER1), found in Zea mays (Maize).